A 903-amino-acid polypeptide reads, in one-letter code: Zinc finger CCCH domain-containing protein 27 (903 aa).

Residues 1–144 (MIKESSSPAL…GRNGAPWAQH (144 aa)) form a disordered region. Residues 11-24 (DADKIEVPSPKDEN) are compositionally biased toward basic and acidic residues. Positions 33-46 (TDNEDFEISDDDDD) are enriched in acidic residues. The span at 86–96 (SHGEAQKDFFP) shows a compositional bias: basic and acidic residues. Residues 225 to 253 (GMPRQRCRDFEERGFCLRGDMCPMEHGLN) form a C3H1-type zinc finger. Residues 390-456 (ASKKLGHGKT…GRQSNRASHK (67 aa)) form a disordered region. The segment covering 397–410 (GKTANATSTSATGN) has biased composition (low complexity). Residues 432-441 (KDSNGQSNSR) are compositionally biased toward polar residues. Residues 459 to 531 (RTLYVNGIPL…RFIKLWWANR (73 aa)) enclose the RRM domain. Disordered stretches follow at residues 545-609 (KSSH…DTKR), 642-720 (KQKG…QTSP), and 826-903 (TNHS…DVSQ). Positions 556–576 (SVPQPSSSNRGKENLQSATPR) are enriched in polar residues. Residues 577–587 (ASSGSSAEASG) show a composition bias toward low complexity. The stretch at 608-649 (KRQESLELLEELRKKQEILAQKRDEFRRQLEKLAKQKGLANS) forms a coiled coil. Residues 693-708 (SGELASSSHKSSATSA) are compositionally biased toward low complexity. Residues 826 to 886 (TNHSRFQKTS…SMPTATSAKT (61 aa)) are compositionally biased toward polar residues.

The polypeptide is Zinc finger CCCH domain-containing protein 27 (Oryza sativa subsp. japonica (Rice)).